We begin with the raw amino-acid sequence, 200 residues long: Putative vacuolar protein sorting-associated protein 24 homolog 2 (200 aa).

Residues 2–23 are a coiled coil; the sequence is TIKSLLSDIEREERNVHKAIKD.

This sequence belongs to the SNF7 family. In terms of assembly, component of the endosomal sorting required for transport complex III (ESCRT-III), composed at least of VPS2, VPS20, VPS24 and VPS32.

Its subcellular location is the endosome. Functionally, component of the ESCRT-III complex, which is required for multivesicular bodies (MVBs) formation and sorting of endosomal cargo proteins into MVBs. The ESCRT-III complex is probably involved in the concentration of MVB cargo. The chain is Putative vacuolar protein sorting-associated protein 24 homolog 2 (VPS24-2) from Arabidopsis thaliana (Mouse-ear cress).